The chain runs to 117 residues: Calcitonin receptor-stimulating peptide 2 (117 aa).

The N-terminal stretch at 1–25 is a signal peptide; that stretch reads MGFWKFPPFLVLSILVLYQAGMFHT. A propeptide spanning residues 26-79 is cleaved from the precursor; it reads APVRLPLESSFDSATLTEEEVSLLLVAMVKDYVQMKATVLEQESEDFSITAQEK. Cysteines 81 and 86 form a disulfide.

It belongs to the calcitonin family. Mainly expressed in the thyroid gland and CNS. Found in the nerve cells of the cerebrum, hippocampus, hypothalamus, pons/midbrain and thalamus. Also detected in the glia-like cells of pons/midbrain and in meninx of tactus opticus.

It localises to the secreted. The chain is Calcitonin receptor-stimulating peptide 2 (CRSP2) from Sus scrofa (Pig).